Reading from the N-terminus, the 557-residue chain is Copine-4 (557 aa).

2 consecutive C2 domains span residues 3 to 131 (KMSN…SKSL) and 137 to 264 (TAGK…VQWE). The Ca(2+) site is built by D170, D176, D232, D234, and D240. The VWFA domain maps to 305–507 (QIQFTVAIDF…VLRDIVQFVP (203 aa)).

It belongs to the copine family. In terms of assembly, interacts (via VWFA domain) with ACTB, BCOR, BICD2, CCDC22, CDC42BPB, CEP162, MYCBP2, NONO, PDCD6, PITPNM2, RDX, SKIL, SKT, SPTBN1, UBE2O and WTAP. Requires Ca(2+) as cofactor.

In terms of biological role, probable calcium-dependent phospholipid-binding protein that may play a role in calcium-mediated intracellular processes. The sequence is that of Copine-4 from Mus musculus (Mouse).